Here is an 874-residue protein sequence, read N- to C-terminus: DNA mismatch repair protein MutS (874 aa).

ATP is bound at residue 630–637; it reads GPNMAGKS.

It belongs to the DNA mismatch repair MutS family.

In terms of biological role, this protein is involved in the repair of mismatches in DNA. It is possible that it carries out the mismatch recognition step. This protein has a weak ATPase activity. The sequence is that of DNA mismatch repair protein MutS from Chlorobium phaeovibrioides (strain DSM 265 / 1930) (Prosthecochloris vibrioformis (strain DSM 265)).